Here is a 115-residue protein sequence, read N- to C-terminus: NADH-ubiquinone oxidoreductase chain 3 (115 aa).

The next 3 membrane-spanning stretches (helical) occupy residues 5–25 (TALL…FWFF), 55–75 (FFLV…LLPL), and 86–106 (IMML…AYEW).

Belongs to the complex I subunit 3 family. As to quaternary structure, core subunit of respiratory chain NADH dehydrogenase (Complex I) which is composed of 45 different subunits. Interacts with TMEM186. Interacts with TMEM242.

It localises to the mitochondrion inner membrane. It carries out the reaction a ubiquinone + NADH + 5 H(+)(in) = a ubiquinol + NAD(+) + 4 H(+)(out). Its function is as follows. Core subunit of the mitochondrial membrane respiratory chain NADH dehydrogenase (Complex I) which catalyzes electron transfer from NADH through the respiratory chain, using ubiquinone as an electron acceptor. Essential for the catalytic activity of complex I. The sequence is that of NADH-ubiquinone oxidoreductase chain 3 from Peromyscus sejugis (Santa Cruz mouse).